Here is a 286-residue protein sequence, read N- to C-terminus: Putative 2-aminoethylphosphonate transport system permease protein PhnU (286 aa).

The next 6 helical transmembrane spans lie at 19–39 (WLLL…SLIV), 76–96 (FFAT…LVFI), 111–131 (FIAL…GSAG), 150–170 (FLYS…PLVM), 202–222 (VIFP…LLLT), and 254–274 (YTVA…LFSL). The ABC transmembrane type-1 domain occupies 68 to 275 (LLNTLQIAFF…VLSLGLFSLY (208 aa)).

This sequence belongs to the binding-protein-dependent transport system permease family.

Its subcellular location is the cell inner membrane. Its function is as follows. Probably part of the PhnSTUV complex (TC 3.A.1.11.5) involved in 2-aminoethylphosphonate import. Probably responsible for the translocation of the substrate across the membrane. The sequence is that of Putative 2-aminoethylphosphonate transport system permease protein PhnU (phnU) from Salmonella typhimurium (strain LT2 / SGSC1412 / ATCC 700720).